A 273-amino-acid chain; its full sequence is 2,3,4,5-tetrahydropyridine-2,6-dicarboxylate N-succinyltransferase (273 aa).

2 residues coordinate substrate: Arg104 and Asp141.

The protein belongs to the transferase hexapeptide repeat family. In terms of assembly, homotrimer.

It is found in the cytoplasm. The enzyme catalyses (S)-2,3,4,5-tetrahydrodipicolinate + succinyl-CoA + H2O = (S)-2-succinylamino-6-oxoheptanedioate + CoA. It participates in amino-acid biosynthesis; L-lysine biosynthesis via DAP pathway; LL-2,6-diaminopimelate from (S)-tetrahydrodipicolinate (succinylase route): step 1/3. The polypeptide is 2,3,4,5-tetrahydropyridine-2,6-dicarboxylate N-succinyltransferase (Buchnera aphidicola subsp. Schizaphis graminum (strain Sg)).